The following is a 161-amino-acid chain: uncharacterized protein (161 aa).

This sequence to M.thermoautotrophicum MTH862.

This is an uncharacterized protein from Methanocaldococcus jannaschii (strain ATCC 43067 / DSM 2661 / JAL-1 / JCM 10045 / NBRC 100440) (Methanococcus jannaschii).